The following is a 234-amino-acid chain: Large ribosomal subunit protein uL1 (234 aa).

The protein belongs to the universal ribosomal protein uL1 family. Part of the 50S ribosomal subunit.

Its function is as follows. Binds directly to 23S rRNA. The L1 stalk is quite mobile in the ribosome, and is involved in E site tRNA release. In terms of biological role, protein L1 is also a translational repressor protein, it controls the translation of the L11 operon by binding to its mRNA. The sequence is that of Large ribosomal subunit protein uL1 from Pectobacterium carotovorum subsp. carotovorum (strain PC1).